Reading from the N-terminus, the 265-residue chain is U6 snRNA phosphodiesterase 1 (265 aa).

A disordered region spans residues 1-22 (MSLVCYESSSSGEDDDETISDN). Histidine 109 (proton acceptor) is an active-site residue. AMP is bound by residues 109 to 111 (HLS) and 195 to 201 (DFLLHIS). 197-201 (LLHIS) provides a ligand contact to UMP. The active-site Proton donor is histidine 199.

This sequence belongs to the 2H phosphoesterase superfamily. USB1 family.

The protein localises to the nucleus. The enzyme catalyses a 3'-end uridylyl-uridine-RNA = a 3'-end 2',3'-cyclophospho-uridine-RNA + uridine. Functionally, 3'-5' RNA exonuclease that trims the 3' end of oligo(U) tracts of the pre-U6 small nuclear RNA (snRNA) molecule, leading to the formation of a U6 snRNA 3' end-terminated with a 2',3'-cyclic phosphate.d. Participates in the U6 snRNA 3' end processing that prevents U6 snRNA degradation. The protein is U6 snRNA phosphodiesterase 1 of Schizosaccharomyces pombe (strain 972 / ATCC 24843) (Fission yeast).